We begin with the raw amino-acid sequence, 203 residues long: ATP-dependent Clp protease proteolytic subunit (203 aa).

Residue Ser-107 is the Nucleophile of the active site. The active site involves His-132.

Belongs to the peptidase S14 family. As to quaternary structure, fourteen ClpP subunits assemble into 2 heptameric rings which stack back to back to give a disk-like structure with a central cavity, resembling the structure of eukaryotic proteasomes.

The protein localises to the cytoplasm. The catalysed reaction is Hydrolysis of proteins to small peptides in the presence of ATP and magnesium. alpha-casein is the usual test substrate. In the absence of ATP, only oligopeptides shorter than five residues are hydrolyzed (such as succinyl-Leu-Tyr-|-NHMec, and Leu-Tyr-Leu-|-Tyr-Trp, in which cleavage of the -Tyr-|-Leu- and -Tyr-|-Trp bonds also occurs).. In terms of biological role, cleaves peptides in various proteins in a process that requires ATP hydrolysis. Has a chymotrypsin-like activity. Plays a major role in the degradation of misfolded proteins. This is ATP-dependent Clp protease proteolytic subunit from Shewanella denitrificans (strain OS217 / ATCC BAA-1090 / DSM 15013).